The following is a 361-amino-acid chain: Glyceraldehyde-3-phosphate dehydrogenase, glycosomal (361 aa).

Residues 13-14 (RI), D39, Q92, and S135 each bind NAD(+). D-glyceraldehyde 3-phosphate-binding positions include 166–168 (SCT), T198, 227–228 (TG), and R250. The active-site Nucleophile is C167. N336 provides a ligand contact to NAD(+). Positions 359-361 (SKM) match the Microbody targeting signal motif.

It belongs to the glyceraldehyde-3-phosphate dehydrogenase family. Homotetramer.

Its subcellular location is the glycosome. The catalysed reaction is D-glyceraldehyde 3-phosphate + phosphate + NAD(+) = (2R)-3-phospho-glyceroyl phosphate + NADH + H(+). It participates in carbohydrate degradation; glycolysis; pyruvate from D-glyceraldehyde 3-phosphate: step 1/5. The polypeptide is Glyceraldehyde-3-phosphate dehydrogenase, glycosomal (GAPG) (Leishmania mexicana).